Consider the following 38-residue polypeptide: Photosystem II reaction center protein L (38 aa).

The chain crosses the membrane as a helical span at residues 17–37; that stretch reads SLYWGLLLIFVLAVLFSSYIF.

It belongs to the PsbL family. As to quaternary structure, PSII is composed of 1 copy each of membrane proteins PsbA, PsbB, PsbC, PsbD, PsbE, PsbF, PsbH, PsbI, PsbJ, PsbK, PsbL, PsbM, PsbT, PsbX, PsbY, PsbZ, Psb30/Ycf12, at least 3 peripheral proteins of the oxygen-evolving complex and a large number of cofactors. It forms dimeric complexes.

The protein resides in the plastid. It is found in the chloroplast thylakoid membrane. Its function is as follows. One of the components of the core complex of photosystem II (PSII). PSII is a light-driven water:plastoquinone oxidoreductase that uses light energy to abstract electrons from H(2)O, generating O(2) and a proton gradient subsequently used for ATP formation. It consists of a core antenna complex that captures photons, and an electron transfer chain that converts photonic excitation into a charge separation. This subunit is found at the monomer-monomer interface and is required for correct PSII assembly and/or dimerization. The polypeptide is Photosystem II reaction center protein L (Tupiella akineta (Green alga)).